Consider the following 364-residue polypeptide: Zinc finger protein 474 (364 aa).

Residues 1 to 10 (MERGKKKRIS) are compositionally biased toward basic residues. Disordered regions lie at residues 1–21 (MERG…HHSK) and 37–60 (SYSS…DTQK). Residues 93 to 122 (GFRVCYICGREFGSQSIAIHEPQCLQKWHI) form a C2HC/C3H-type 1 zinc finger. Residues Cys-97, Cys-100, His-112, and Cys-116 each contribute to the Zn(2+) site. The disordered stretch occupies residues 127-147 (LPKHLRRPEPSKPQSLSSSGS). Residues 138 to 147 (KPQSLSSSGS) show a composition bias toward low complexity. C2HC/C3H-type zinc fingers lie at residues 164 to 193 (QLLP…KGEG), 220 to 249 (RTVI…KWKM), and 283 to 312 (QLVF…HPYG). 12 residues coordinate Zn(2+): Cys-168, Cys-171, His-183, Cys-187, Cys-224, Cys-227, His-239, Cys-243, Cys-287, Cys-290, His-302, and Cys-306. A disordered region spans residues 187-214 (CKPKGEGPRAPHSNSSDHLTGLKKACSG).

Requires Zn(2+) as cofactor.

The sequence is that of Zinc finger protein 474 (ZNF474) from Homo sapiens (Human).